Consider the following 161-residue polypeptide: Large ribosomal subunit protein uL10 (161 aa).

It belongs to the universal ribosomal protein uL10 family. Part of the ribosomal stalk of the 50S ribosomal subunit. The N-terminus interacts with L11 and the large rRNA to form the base of the stalk. The C-terminus forms an elongated spine to which L12 dimers bind in a sequential fashion forming a multimeric L10(L12)X complex.

Its function is as follows. Forms part of the ribosomal stalk, playing a central role in the interaction of the ribosome with GTP-bound translation factors. The polypeptide is Large ribosomal subunit protein uL10 (rplJ) (Mycoplasma pneumoniae (strain ATCC 29342 / M129 / Subtype 1) (Mycoplasmoides pneumoniae)).